Here is a 99-residue protein sequence, read N- to C-terminus: Aspartyl/glutamyl-tRNA(Asn/Gln) amidotransferase subunit C (99 aa).

It belongs to the GatC family. As to quaternary structure, heterotrimer of A, B and C subunits.

It carries out the reaction L-glutamyl-tRNA(Gln) + L-glutamine + ATP + H2O = L-glutaminyl-tRNA(Gln) + L-glutamate + ADP + phosphate + H(+). The enzyme catalyses L-aspartyl-tRNA(Asn) + L-glutamine + ATP + H2O = L-asparaginyl-tRNA(Asn) + L-glutamate + ADP + phosphate + 2 H(+). In terms of biological role, allows the formation of correctly charged Asn-tRNA(Asn) or Gln-tRNA(Gln) through the transamidation of misacylated Asp-tRNA(Asn) or Glu-tRNA(Gln) in organisms which lack either or both of asparaginyl-tRNA or glutaminyl-tRNA synthetases. The reaction takes place in the presence of glutamine and ATP through an activated phospho-Asp-tRNA(Asn) or phospho-Glu-tRNA(Gln). The chain is Aspartyl/glutamyl-tRNA(Asn/Gln) amidotransferase subunit C from Burkholderia ambifaria (strain MC40-6).